A 180-amino-acid polypeptide reads, in one-letter code: ATP-dependent protease subunit HslV (180 aa).

Thr5 is an active-site residue. Na(+) contacts are provided by Gly165, Cys168, and Thr171.

The protein belongs to the peptidase T1B family. HslV subfamily. As to quaternary structure, a double ring-shaped homohexamer of HslV is capped on each side by a ring-shaped HslU homohexamer. The assembly of the HslU/HslV complex is dependent on binding of ATP.

The protein resides in the cytoplasm. The enzyme catalyses ATP-dependent cleavage of peptide bonds with broad specificity.. Allosterically activated by HslU binding. Its function is as follows. Protease subunit of a proteasome-like degradation complex believed to be a general protein degrading machinery. The protein is ATP-dependent protease subunit HslV of Helicobacter pylori (strain G27).